The following is a 1323-amino-acid chain: PAS domain-containing serine/threonine-protein kinase (1323 aa).

M1 bears the N-acetylmethionine mark. S19 is modified (phosphoserine). Positions 20-47 (LPLPVSAEGPAAQTTAEPSRSFSSAHRH) are disordered. The segment covering 31-43 (AQTTAEPSRSFSS) has biased composition (polar residues). T34 carries the post-translational modification Phosphothreonine. PAS domains follow at residues 119-190 (SSPL…MEAD) and 335-402 (YRAS…SLQL). Residue S582 is modified to Phosphoserine. The segment at 837–857 (AASDRESPGHVPSTLDAGPED) is disordered. Residue S939 is modified to Phosphoserine. The Protein kinase domain maps to 999–1251 (YSTMSPLGSG…LEKLVTDPWV (253 aa)). ATP contacts are provided by residues 1005 to 1013 (LGSGAFGFV), K1028, and 1082 to 1089 (EKHGSGLD). The active-site Proton acceptor is the D1128. ATP is bound at residue D1146. Phosphothreonine; by autocatalysis is present on residues T1161 and T1165. A disordered region spans residues 1298–1323 (CGGPVPGEAPNGQGCLHPGDPRLLTS).

Belongs to the protein kinase superfamily. CAMK Ser/Thr protein kinase family. Autophosphorylated on Thr-1161 and Thr-1165. Autophosphorylation is activated by phospholipids. As to expression, ubiquitously expressed, with slightly higher expression in brain, prostate and testis. Reduced expression was found in placenta. Present in germ cells of testis and in the midpiece of sperm tails (at protein level).

The protein resides in the cytoplasm. The protein localises to the nucleus. It carries out the reaction L-seryl-[protein] + ATP = O-phospho-L-seryl-[protein] + ADP + H(+). It catalyses the reaction L-threonyl-[protein] + ATP = O-phospho-L-threonyl-[protein] + ADP + H(+). With respect to regulation, protein kinase activity is inhibited by the first PAS domain: binding of an unidentified ligand desinhibits the protein kinase activity. May be activated by autophosphorylation on Thr-1161 and Thr-1165. The activating role of autophosphorylation at Thr-1161 is unclear: according to a report, autophosphorylation at Thr-1161 does not play a major role in activation. Autophosphorylation is enhanced upon phosphatidylinositol monophosphate (phosphatidylinositol 4-phosphate) binding and inhibited upon phosphatidylinositol bi- and tri-phosphate binding. In contrast, phosphorylation of target proteins is inhibited upon all phosphatidylinositol-binding (phosphatidylinositol mono- bi- and tri-phosphate). Serine/threonine-protein kinase involved in energy homeostasis and protein translation. Phosphorylates EEF1A1, GYS1, PDX1 and RPS6. Probably plays a role under changing environmental conditions (oxygen, glucose, nutrition), rather than under standard conditions. Acts as a sensor involved in energy homeostasis: regulates glycogen synthase synthesis by mediating phosphorylation of GYS1, leading to GYS1 inactivation. May be involved in glucose-stimulated insulin production in pancreas and regulation of glucagon secretion by glucose in alpha cells; however such data require additional evidences. May play a role in regulation of protein translation by phosphorylating EEF1A1, leading to increase translation efficiency. May also participate in respiratory regulation. The sequence is that of PAS domain-containing serine/threonine-protein kinase (PASK) from Homo sapiens (Human).